Reading from the N-terminus, the 298-residue chain is Cyclin-dependent kinase 2 (298 aa).

An N-acetylmethionine modification is found at M1. The Protein kinase domain maps to 4-286 (FQKVEKIGEG…AKAALAHPFF (283 aa)). K6 carries the post-translational modification N6-acetyllysine. An ATP-binding site is contributed by 10–18 (IGEGTYGVV). T14 carries the post-translational modification Phosphothreonine. Y15 bears the Phosphotyrosine; by WEE1 mark. Phosphotyrosine is present on Y19. ATP is bound by residues K33, 81-83 (ELL), and D86. The active-site Proton acceptor is the D127. Residues 129 to 132 (KPQN) and D145 each bind ATP. Mg(2+)-binding residues include N132 and D145. T160 is subject to Phosphothreonine; by CAK and CCRK.

The protein belongs to the protein kinase superfamily. CMGC Ser/Thr protein kinase family. CDC2/CDKX subfamily. In terms of assembly, found in a complex with CABLES1, CCNA1 and CCNE1. Interacts with CABLES1. Interacts with UHRF2. Part of a complex consisting of UHRF2, CDK2 and CCNE1. Interacts with the Speedy/Ringo proteins SPDYA and SPDYC. Interaction with SPDYA promotes kinase activation via a conformation change that alleviates obstruction of the substrate-binding cleft by the T-loop. Found in a complex with both SPDYA and CDKN1B/KIP1. Binds to RB1 and CDK7. Binding to CDKN1A (p21) leads to CDK2/cyclin E inactivation at the G1-S phase DNA damage checkpoint, thereby arresting cells at the G1-S transition during DNA repair. Associated with PTPN6 and beta-catenin/CTNNB1. Interacts with CACUL1. May interact with CEP63. Interacts with ANKRD17. Interacts with CEBPA (when phosphorylated). Forms a ternary complex with CCNA2 and CDKN1B; CDKN1B inhibits the kinase activity of CDK2 through conformational rearrangements. Interacts with cyclins A, B1, B3, D, or E. Interacts with CDK2AP2. Mg(2+) serves as cofactor. In terms of processing, phosphorylated at Thr-160 by CDK7 in a CAK complex. Phosphorylation at Thr-160 promotes kinase activity, whereas phosphorylation at Tyr-15 by WEE1 reduces slightly kinase activity. Phosphorylated on Thr-14 and Tyr-15 during S and G2 phases before being dephosphorylated by CDC25A. Post-translationally, nitrosylated after treatment with nitric oxide (DETA-NO).

It localises to the cytoplasm. The protein resides in the cytoskeleton. It is found in the microtubule organizing center. The protein localises to the centrosome. Its subcellular location is the nucleus. It localises to the cajal body. The protein resides in the endosome. The catalysed reaction is L-seryl-[protein] + ATP = O-phospho-L-seryl-[protein] + ADP + H(+). The enzyme catalyses L-threonyl-[protein] + ATP = O-phospho-L-threonyl-[protein] + ADP + H(+). Its activity is regulated as follows. Phosphorylation at Thr-14 or Tyr-15 inactivates the enzyme, while phosphorylation at Thr-160 activates it. Stimulated by MYC. Inactivated by CDKN1A (p21). Serine/threonine-protein kinase involved in the control of the cell cycle; essential for meiosis, but dispensable for mitosis. Phosphorylates CABLES1, CTNNB1, CDK2AP2, ERCC6, NBN, USP37, p53/TP53, NPM1, CDK7, RB1, BRCA2, MYC, NPAT, EZH2. Triggers duplication of centrosomes and DNA. Acts at the G1-S transition to promote the E2F transcriptional program and the initiation of DNA synthesis, and modulates G2 progression; controls the timing of entry into mitosis/meiosis by controlling the subsequent activation of cyclin B/CDK1 by phosphorylation, and coordinates the activation of cyclin B/CDK1 at the centrosome and in the nucleus. Crucial role in orchestrating a fine balance between cellular proliferation, cell death, and DNA repair in embryonic stem cells (ESCs). Activity of CDK2 is maximal during S phase and G2; activated by interaction with cyclin E during the early stages of DNA synthesis to permit G1-S transition, and subsequently activated by cyclin A2 (cyclin A1 in germ cells) during the late stages of DNA replication to drive the transition from S phase to mitosis, the G2 phase. EZH2 phosphorylation promotes H3K27me3 maintenance and epigenetic gene silencing. Cyclin E/CDK2 prevents oxidative stress-mediated Ras-induced senescence by phosphorylating MYC. Involved in G1-S phase DNA damage checkpoint that prevents cells with damaged DNA from initiating mitosis; regulates homologous recombination-dependent repair by phosphorylating BRCA2, this phosphorylation is low in S phase when recombination is active, but increases as cells progress towards mitosis. In response to DNA damage, double-strand break repair by homologous recombination a reduction of CDK2-mediated BRCA2 phosphorylation. Involved in regulation of telomere repair by mediating phosphorylation of NBN. Phosphorylation of RB1 disturbs its interaction with E2F1. NPM1 phosphorylation by cyclin E/CDK2 promotes its dissociation from unduplicated centrosomes, thus initiating centrosome duplication. Cyclin E/CDK2-mediated phosphorylation of NPAT at G1-S transition and until prophase stimulates the NPAT-mediated activation of histone gene transcription during S phase. Required for vitamin D-mediated growth inhibition by being itself inactivated. Involved in the nitric oxide- (NO) mediated signaling in a nitrosylation/activation-dependent manner. USP37 is activated by phosphorylation and thus triggers G1-S transition. CTNNB1 phosphorylation regulates insulin internalization. Phosphorylates FOXP3 and negatively regulates its transcriptional activity and protein stability. Phosphorylates ERCC6 which is essential for its chromatin remodeling activity at DNA double-strand breaks. Acts as a regulator of the phosphatidylinositol 3-kinase/protein kinase B signal transduction by mediating phosphorylation of the C-terminus of protein kinase B (PKB/AKT1 and PKB/AKT2), promoting its activation. This is Cyclin-dependent kinase 2 (CDK2) from Mesocricetus auratus (Golden hamster).